The following is a 321-amino-acid chain: uncharacterized protein (321 aa).

The segment at 280–306 (NSDHINNENNTNSNNDDNSNNSNNNNE) is disordered. A compositionally biased stretch (low complexity) spans 286-306 (NENNTNSNNDDNSNNSNNNNE).

This is an uncharacterized protein from Dictyostelium discoideum (Social amoeba).